A 287-amino-acid polypeptide reads, in one-letter code: ATP synthase gamma chain (287 aa).

The protein belongs to the ATPase gamma chain family. As to quaternary structure, F-type ATPases have 2 components, CF(1) - the catalytic core - and CF(0) - the membrane proton channel. CF(1) has five subunits: alpha(3), beta(3), gamma(1), delta(1), epsilon(1). CF(0) has three main subunits: a, b and c.

The protein localises to the cell inner membrane. Produces ATP from ADP in the presence of a proton gradient across the membrane. The gamma chain is believed to be important in regulating ATPase activity and the flow of protons through the CF(0) complex. This chain is ATP synthase gamma chain, found in Colwellia maris.